A 517-amino-acid polypeptide reads, in one-letter code: GMP synthase [glutamine-hydrolyzing] (517 aa).

The Glutamine amidotransferase type-1 domain occupies 11-202; that stretch reads KIIVLDYGSQ…AFDICKAEAN (192 aa). C88 serves as the catalytic Nucleophile. Active-site residues include H176 and E178. One can recognise a GMPS ATP-PPase domain in the interval 203 to 392; the sequence is WSMDDFITKQ…LGMPHALVWR (190 aa). 230 to 236 provides a ligand contact to ATP; it reads SGGVDSS.

As to quaternary structure, homodimer.

It catalyses the reaction XMP + L-glutamine + ATP + H2O = GMP + L-glutamate + AMP + diphosphate + 2 H(+). It participates in purine metabolism; GMP biosynthesis; GMP from XMP (L-Gln route): step 1/1. In terms of biological role, catalyzes the synthesis of GMP from XMP. This is GMP synthase [glutamine-hydrolyzing] from Lacticaseibacillus casei (strain BL23) (Lactobacillus casei).